Here is a 341-residue protein sequence, read N- to C-terminus: GDT1-like protein 1, chloroplastic (341 aa).

Low complexity predominate over residues 1 to 13; that stretch reads MASVASSTVFASS. 2 disordered regions span residues 1-41 and 54-76; these read MASV…GRSV and VVTR…GGGR. The N-terminal 57 residues, 1-57, are a transit peptide targeting the chloroplast; that stretch reads MASVASSTVFASSLPHHRATTRAPPTPPRIPRRARLPGRSVVSCLPKRGSEKLVVTR. The next 7 helical transmembrane spans lie at 79 to 99, 117 to 137, 158 to 178, 203 to 223, 246 to 266, 286 to 306, and 318 to 338; these read PSLD…VLML, VVGD…LIFF, AIIF…SVVL, FLAA…AASG, GAGI…VFIA, LGVI…AVLG, and IVAY…LVEI.

It belongs to the GDT1 family.

The protein localises to the plastid. The protein resides in the chloroplast membrane. The protein is GDT1-like protein 1, chloroplastic of Oryza sativa subsp. indica (Rice).